The chain runs to 288 residues: GDSL esterase/lipase At3g43550 (288 aa).

A signal peptide spans 1 to 19 (MKLQIIWLALVLIAVETYA). A glycan (N-linked (GlcNAc...) asparagine) is linked at Asn-25. Ser-37 (nucleophile) is an active-site residue.

It belongs to the 'GDSL' lipolytic enzyme family.

The protein localises to the secreted. This is GDSL esterase/lipase At3g43550 from Arabidopsis thaliana (Mouse-ear cress).